A 212-amino-acid polypeptide reads, in one-letter code: uncharacterized protein (212 aa).

Residues G53, E74, and D97 each contribute to the S-adenosyl-L-methionine site.

The protein belongs to the methyltransferase superfamily. YrrT family.

Its function is as follows. Could be a S-adenosyl-L-methionine-dependent methyltransferase. This is an uncharacterized protein from Bacillus thuringiensis (strain Al Hakam).